The primary structure comprises 197 residues: Protein GrpE (197 aa).

The disordered stretch occupies residues 1–39; it reads MSSKEQKTPEGQAPEEIIMDQHEEIEAVEPEASAEQVDP.

The protein belongs to the GrpE family. In terms of assembly, homodimer.

It is found in the cytoplasm. Its function is as follows. Participates actively in the response to hyperosmotic and heat shock by preventing the aggregation of stress-denatured proteins, in association with DnaK and GrpE. It is the nucleotide exchange factor for DnaK and may function as a thermosensor. Unfolded proteins bind initially to DnaJ; upon interaction with the DnaJ-bound protein, DnaK hydrolyzes its bound ATP, resulting in the formation of a stable complex. GrpE releases ADP from DnaK; ATP binding to DnaK triggers the release of the substrate protein, thus completing the reaction cycle. Several rounds of ATP-dependent interactions between DnaJ, DnaK and GrpE are required for fully efficient folding. This Escherichia coli O45:K1 (strain S88 / ExPEC) protein is Protein GrpE.